Consider the following 266-residue polypeptide: MKEIKVIIAGPRGRMGHEAVLLMERTEHFNLVAAVDYKHGGEKISDLPGMPALHAPIYADLHTCLDEVEADVLLDLTTPEVGKQHVTLAVERGLRSVIGTTGFTEEELARLTENAKEKAVGTIIAPNFAIGAVLMMKFSQMAAKYFQDVEVIELHHDQKLDAPSGTAVKTVELIRQNRESKQQGHPNEVEQLAGARGANVDGIHIHSVRLPGLIAHQEVMFGGDGQMLTVRHDSFNRASFMSGVKLSIETVMNLDHLVYGLENIID.

Residue 10–15 (GPRGRM) participates in NAD(+) binding. Lys38 is an NADP(+) binding site. NAD(+)-binding positions include 99–101 (GTT) and 125–128 (APNF). The active-site Proton donor/acceptor is the His155. His156 lines the (S)-2,3,4,5-tetrahydrodipicolinate pocket. Catalysis depends on Lys159, which acts as the Proton donor. 165 to 166 (GT) provides a ligand contact to (S)-2,3,4,5-tetrahydrodipicolinate.

It belongs to the DapB family.

The protein resides in the cytoplasm. The catalysed reaction is (S)-2,3,4,5-tetrahydrodipicolinate + NAD(+) + H2O = (2S,4S)-4-hydroxy-2,3,4,5-tetrahydrodipicolinate + NADH + H(+). It carries out the reaction (S)-2,3,4,5-tetrahydrodipicolinate + NADP(+) + H2O = (2S,4S)-4-hydroxy-2,3,4,5-tetrahydrodipicolinate + NADPH + H(+). It functions in the pathway amino-acid biosynthesis; L-lysine biosynthesis via DAP pathway; (S)-tetrahydrodipicolinate from L-aspartate: step 4/4. Its function is as follows. Catalyzes the conversion of 4-hydroxy-tetrahydrodipicolinate (HTPA) to tetrahydrodipicolinate. This is 4-hydroxy-tetrahydrodipicolinate reductase from Bacillus cereus (strain B4264).